The chain runs to 246 residues: CTD nuclear envelope phosphatase 1 homolog (246 aa).

The chain crosses the membrane as a helical span at residues 3 to 23; it reads TIAQSVFCFLAGFFNFFLLYF. One can recognise an FCP1 homology domain in the interval 53-220; that stretch reads LTVKRKILVL…LNLLPFLDAL (168 aa).

The protein belongs to the dullard family.

The protein localises to the membrane. The protein resides in the nucleus envelope. It catalyses the reaction O-phospho-L-seryl-[protein] + H2O = L-seryl-[protein] + phosphate. The enzyme catalyses O-phospho-L-threonyl-[protein] + H2O = L-threonyl-[protein] + phosphate. Functionally, serine/threonine protein phosphatase that may dephosphorylate and activate lipin-like phosphatases. Lipins are phosphatidate phosphatases that catalyze the conversion of phosphatidic acid to diacylglycerol and control the metabolism of fatty acids at different levels. May indirectly modulate the lipid composition of nuclear and/or endoplasmic reticulum membranes and be required for proper nuclear membrane morphology and/or dynamics. Contributes to closure of nuclear envelope (NE) holes and prevents excess nuclear membranes after meiosis and mitosis, possibly through spatial regulation of lipin. May limit the production of endoplasmic reticulum (ER) sheets proximal to the NE to prevent the ER membranes that feed into NE openings from invading the nuclear interior and thereby restrict nuclear transport to nuclear pore complexes (NPCs). May also indirectly regulate the production of lipid droplets and triacylglycerol. In Caenorhabditis elegans, this protein is CTD nuclear envelope phosphatase 1 homolog (cnep-1).